A 392-amino-acid chain; its full sequence is 1-deoxy-D-xylulose 5-phosphate reductoisomerase (392 aa).

6 residues coordinate NADPH: T10, G11, S12, I13, N38, and N124. K125 provides a ligand contact to 1-deoxy-D-xylulose 5-phosphate. E126 contributes to the NADPH binding site. D150 is a binding site for Mn(2+). The 1-deoxy-D-xylulose 5-phosphate site is built by S151, E152, S176, and H199. E152 provides a ligand contact to Mn(2+). G205 lines the NADPH pocket. 1-deoxy-D-xylulose 5-phosphate-binding residues include S212, N217, K218, and E221. E221 serves as a coordination point for Mn(2+).

This sequence belongs to the DXR family. It depends on Mg(2+) as a cofactor. Mn(2+) serves as cofactor.

It catalyses the reaction 2-C-methyl-D-erythritol 4-phosphate + NADP(+) = 1-deoxy-D-xylulose 5-phosphate + NADPH + H(+). The protein operates within isoprenoid biosynthesis; isopentenyl diphosphate biosynthesis via DXP pathway; isopentenyl diphosphate from 1-deoxy-D-xylulose 5-phosphate: step 1/6. Catalyzes the NADPH-dependent rearrangement and reduction of 1-deoxy-D-xylulose-5-phosphate (DXP) to 2-C-methyl-D-erythritol 4-phosphate (MEP). The sequence is that of 1-deoxy-D-xylulose 5-phosphate reductoisomerase from Gloeobacter violaceus (strain ATCC 29082 / PCC 7421).